The primary structure comprises 263 residues: Imidazole glycerol phosphate synthase subunit HisF (263 aa).

Active-site residues include aspartate 22 and aspartate 141.

It belongs to the HisA/HisF family. In terms of assembly, heterodimer of HisH and HisF.

The protein resides in the cytoplasm. The enzyme catalyses 5-[(5-phospho-1-deoxy-D-ribulos-1-ylimino)methylamino]-1-(5-phospho-beta-D-ribosyl)imidazole-4-carboxamide + L-glutamine = D-erythro-1-(imidazol-4-yl)glycerol 3-phosphate + 5-amino-1-(5-phospho-beta-D-ribosyl)imidazole-4-carboxamide + L-glutamate + H(+). It participates in amino-acid biosynthesis; L-histidine biosynthesis; L-histidine from 5-phospho-alpha-D-ribose 1-diphosphate: step 5/9. In terms of biological role, IGPS catalyzes the conversion of PRFAR and glutamine to IGP, AICAR and glutamate. The HisF subunit catalyzes the cyclization activity that produces IGP and AICAR from PRFAR using the ammonia provided by the HisH subunit. The sequence is that of Imidazole glycerol phosphate synthase subunit HisF from Clavibacter michiganensis subsp. michiganensis (strain NCPPB 382).